The sequence spans 298 residues: Probable prolyl 4-hydroxylase 4 (298 aa).

Residues 1–6 lie on the Cytoplasmic side of the membrane; that stretch reads MARRGL. The chain crosses the membrane as a helical; Signal-anchor for type II membrane protein span at residues 7–25; the sequence is LISFFAIFSVLLQSSTSLI. Residues 26-298 are Lumenal-facing; the sequence is SSSSVFVNPS…GYCRRSCKAC (273 aa). N77 is a glycosylation site (N-linked (GlcNAc...) asparagine). One can recognise a Fe2OG dioxygenase domain in the interval 120 to 245; the sequence is NGEDIQVLRY…KWSATKWIHV (126 aa). Positions 138 and 140 each coordinate Fe cation. N164 is a glycosylation site (N-linked (GlcNAc...) asparagine). Residue H226 participates in Fe cation binding. A 2-oxoglutarate-binding site is contributed by K236. Residues N257 and N262 are each glycosylated (N-linked (GlcNAc...) asparagine). Residues 258-298 enclose the ShKT domain; sequence CTDMNESCERWAVLGECTKNPEYMVGTTELPGYCRRSCKAC. 3 cysteine pairs are disulfide-bonded: C258-C298, C265-C291, and C274-C295.

Belongs to the P4HA family. Fe(2+) serves as cofactor. The cofactor is L-ascorbate.

It localises to the endoplasmic reticulum membrane. It carries out the reaction L-prolyl-[collagen] + 2-oxoglutarate + O2 = trans-4-hydroxy-L-prolyl-[collagen] + succinate + CO2. Catalyzes the post-translational formation of 4-hydroxyproline in -Xaa-Pro-Gly- sequences in proline-rich peptide sequences of plant glycoproteins and other proteins. Hydroxyprolines are important constituent of many plant cell wall glycoproteins such as extensins, hydroxyproline-rich glycoproteins, lectins and arabinogalactan proteins. This is Probable prolyl 4-hydroxylase 4 from Arabidopsis thaliana (Mouse-ear cress).